We begin with the raw amino-acid sequence, 593 residues long: Kelch-like protein 2 (593 aa).

The interval 1 to 29 is disordered; sequence METPPLPPACTKQGHQKPLDSKDENPEKH. Residues 17 to 29 are compositionally biased toward basic and acidic residues; sequence KPLDSKDENPEKH. Positions 56–123 constitute a BTB domain; sequence CDVTIVAEDM…VYTAEIQVTE (68 aa). 6 Kelch repeats span residues 308-353, 354-400, 402-447, 449-496, 497-543, and 545-591; these read LMVV…YMAG, LVFA…VLNG, LYAV…VVGG, LYAV…VLNN, LLYA…AVNG, and LYVV…VIDK.

Component of the BCR(KLHL2) E3 ubiquitin ligase complex, at least composed of CUL3 and KLHL2 and RBX1. Binds actin. Interacts with KLHL12. Interacts (via N-terminus) with FYN (via SH3 domain).

It is found in the cytoplasm. The protein resides in the cytoskeleton. Its subcellular location is the cell projection. It localises to the ruffle. The protein localises to the lamellipodium. It is found in the cytosol. The protein operates within protein modification; protein ubiquitination. Substrate-specific adapter of a BCR (BTB-CUL3-RBX1) E3 ubiquitin ligase complex that mediates the ubiquitination of target proteins, such as NPTXR, WNK1, WNK3 and WNK4, leading most often to their proteasomal degradation. The BCR(KLHL2) complex catalyzes ubiquitination and degradation of NPTXR. Responsible for degradative ubiquitination of the WNK kinases WNK1, WNK3 and WNK4. Plays a role in the reorganization of the actin cytoskeleton. Promotes growth of cell projections in oligodendrocyte precursors. This chain is Kelch-like protein 2, found in Mus musculus (Mouse).